The following is a 301-amino-acid chain: Sulfate adenylyltransferase subunit 2 (301 aa).

The protein belongs to the PAPS reductase family. CysD subfamily. Heterodimer composed of CysD, the smaller subunit, and CysN.

It catalyses the reaction sulfate + ATP + H(+) = adenosine 5'-phosphosulfate + diphosphate. Its pathway is sulfur metabolism; hydrogen sulfide biosynthesis; sulfite from sulfate: step 1/3. Functionally, with CysN forms the ATP sulfurylase (ATPS) that catalyzes the adenylation of sulfate producing adenosine 5'-phosphosulfate (APS) and diphosphate, the first enzymatic step in sulfur assimilation pathway. APS synthesis involves the formation of a high-energy phosphoric-sulfuric acid anhydride bond driven by GTP hydrolysis by CysN coupled to ATP hydrolysis by CysD. The chain is Sulfate adenylyltransferase subunit 2 from Shewanella woodyi (strain ATCC 51908 / MS32).